We begin with the raw amino-acid sequence, 109 residues long: Staphostatin B (109 aa).

A binds to staphopain B region spans residues 97–101 (IGTSR).

The protein belongs to the protease inhibitor I57 (SspC) family. As to quaternary structure, forms a stable non-covalent complex with prematurely activated/folded SspB.

It is found in the cytoplasm. In terms of biological role, specifically inhibits the cysteine protease staphopain B (SspB) by blocking the active site of the enzyme. Probably required to protect cytoplasmic proteins from being degraded by prematurely activated/folded prostaphopain B. Also involved in growth capacity, viability and bacterial morphology. The protein is Staphostatin B (sspC) of Staphylococcus aureus (strain Mu50 / ATCC 700699).